The chain runs to 819 residues: Phenylalanine--tRNA ligase beta subunit (819 aa).

The tRNA-binding domain occupies 42–154 (RGGLRGLVIG…SDAPVGMPAA (113 aa)). Positions 412 to 488 (LKPHLISLSF…RIYGYNQVEL (77 aa)) constitute a B5 domain. Residues aspartate 466, aspartate 472, glutamate 475, and glutamate 476 each contribute to the Mg(2+) site. Residues 726-819 (PRFPEVKRDL…LEQKLGAQLR (94 aa)) form the FDX-ACB domain.

The protein belongs to the phenylalanyl-tRNA synthetase beta subunit family. Type 1 subfamily. Tetramer of two alpha and two beta subunits. It depends on Mg(2+) as a cofactor.

Its subcellular location is the cytoplasm. The enzyme catalyses tRNA(Phe) + L-phenylalanine + ATP = L-phenylalanyl-tRNA(Phe) + AMP + diphosphate + H(+). The chain is Phenylalanine--tRNA ligase beta subunit from Porphyromonas gingivalis (strain ATCC BAA-308 / W83).